We begin with the raw amino-acid sequence, 417 residues long: Tyrosine--tRNA ligase (417 aa).

Position 34 (Tyr-34) interacts with L-tyrosine. The 'HIGH' region signature appears at 39 to 48 (PTAKSIHIGN). L-tyrosine contacts are provided by Tyr-165 and Gln-169. Positions 227-231 (KFGKS) match the 'KMSKS' region motif. Lys-230 serves as a coordination point for ATP. The S4 RNA-binding domain maps to 349-416 (TDVVELLVKD…GKKKYFLAKV (68 aa)).

The protein belongs to the class-I aminoacyl-tRNA synthetase family. TyrS type 1 subfamily. As to quaternary structure, homodimer.

It localises to the cytoplasm. The enzyme catalyses tRNA(Tyr) + L-tyrosine + ATP = L-tyrosyl-tRNA(Tyr) + AMP + diphosphate + H(+). Catalyzes the attachment of tyrosine to tRNA(Tyr) in a two-step reaction: tyrosine is first activated by ATP to form Tyr-AMP and then transferred to the acceptor end of tRNA(Tyr). The polypeptide is Tyrosine--tRNA ligase (Oenococcus oeni (strain ATCC BAA-331 / PSU-1)).